The following is an 82-amino-acid chain: Small ribosomal subunit protein eS21z (82 aa).

Methionine 1 carries the post-translational modification N-acetylmethionine.

Belongs to the eukaryotic ribosomal protein eS21 family.

The protein is Small ribosomal subunit protein eS21z (RPS21B) of Arabidopsis thaliana (Mouse-ear cress).